We begin with the raw amino-acid sequence, 176 residues long: Macro domain-containing protein LMOf2365_2748 (176 aa).

The Macro domain occupies 1 to 175 (MEITVVKGDI…LYNKLINSEV (175 aa)).

This sequence belongs to the MacroD-type family.

The chain is Macro domain-containing protein LMOf2365_2748 from Listeria monocytogenes serotype 4b (strain F2365).